A 1068-amino-acid chain; its full sequence is MEGKLFLGQYLICVILLLGQLHGYKSCIEKERKALLELKAFLIPLNAGEWNDNVLSWTNDTKSDCCQWMGVECNRKSGRITNIAFGIGFIIENPLLNLSLLHPFEDVRSLDLSSSRSCEDCGFSGLFDDVEGYKSLSRLRNLEILDLSSHRFNNSIFPFLNAATSLTTLFLTYNNMHSPFLVKEFKDLTNLEHLDLRGNRFNGSIPTQDYNSLRRFRKLEILDLSDNLFNSRIFPFLNSATSLKSLSLWGNNMGGPFPAKELRDLTNVELLDLSRNRFNGSIPVRALFALRKLKALDLSDNEFSSSVELQGKFAKTKPLSGTCPWKNMEELKLSNNKLAGQFPLCLTSLTGLRVLDLSSNQLTGNVPSALANLESLEYLSLFGNNFEGFFSLGLLANLSKLKVLRLDSQSNSLEVEFETSWKPKFQLVVIALRSCNLEKVPHFLLHQKDLHHVDLSDNQIHGNFPSWLLENNTKLEVLLLQNNSFTSFQLPKSAHNLLFLNVSVNKFNHLFLQNFGWILPHLVCVNLAYNGFQGNLPSSLDNMKSIEFLDLSHNRFHGKLPRRFLKGCYNLTILKLSHNKLSGEVFPEAANFTRLWVMSMDNNLFTGNIGKGFRSLPSLNVLDISNNKLTGVIPSWIGERQGLFALQLSNNMLEGEIPTSLFNISYLQLLDLSSNRLSGDIPPHVSSIYHGAVLLLQNNNLSGVIPDTLLLNVIVLDLRNNRLSGNLPEFINTQNISILLLRGNNFTGQIPHQFCSLSNIQLLDLSNNKFNGSIPSCLSNTSFGLRKGDDSYRYDVPSRFGTAKDPVYFESLLMIDEFNMVNETNSQTKIEFATKHRYDAYMGGNLKLLFGMDLSENELSGEIPVELGGLVELEALNLSHNNLSGVILESFSGLKNVESLDLSFNRLQGPIPLQLTDMISLAVFNVSYNNLSGIVPQGRQFNTFETQSYFGNPLLCGKSIDISCASNNFHPTDNGVEADESTVDMESFYWSFVAAYVTILLGILASLSFDSPWSRAWFYIVDAFVLKVRNMLWQNTAGTKCSYVLVSLSSPSVVVLLKPPALFHKTRT.

A signal peptide spans 1–23 (MEGKLFLGQYLICVILLLGQLHG). The Extracellular portion of the chain corresponds to 24–986 (YKSCIEKERK…EADESTVDME (963 aa)). N59 and N97 each carry an N-linked (GlcNAc...) asparagine glycan. LRR repeat units lie at residues 104–129 (FEDV…LFDD), 139–162 (LRNL…FLNA), 164–187 (TSLT…EFKD), 188–212 (LTNL…DYNS), 216–239 (FRKL…FLNS), 241–264 (TSLK…ELRD), 265–290 (LTNV…LFAL), 292–315 (KLKA…KFAK), 325–349 (WKNM…LTSL), 350–373 (TGLR…LANL), 375–397 (SLEY…LLAN), 398–423 (LSKL…SWKP), 424–447 (KFQL…LLHQ), 448–471 (KDLH…LLEN), 472–497 (NTKL…AHNL), 499–517 (FLNV…NFGW), 519–543 (LPHL…LDNM), 544–567 (KSIE…FLKG), and 569–594 (YNLT…NFTR). N153 carries an N-linked (GlcNAc...) asparagine glycan. N202 carries N-linked (GlcNAc...) asparagine glycosylation. N279 carries N-linked (GlcNAc...) asparagine glycosylation. An N-linked (GlcNAc...) asparagine glycan is attached at N397. N-linked (GlcNAc...) asparagine glycans are attached at residues N471, N482, and N501. Residues N570 and N591 are each glycosylated (N-linked (GlcNAc...) asparagine). An LRR 20; degenerate repeat occupies 596–615 (WVMSMDNNLFTGNIGKGFRS). LRR repeat units follow at residues 616 to 639 (LPSL…WIGE), 641 to 664 (QGLF…LFNI), 665 to 688 (SYLQ…VSSI), 690 to 710 (HGAV…DTLL), and 711 to 734 (LNVI…INTQ). An N-linked (GlcNAc...) asparagine glycan is attached at N663. N700 carries an N-linked (GlcNAc...) asparagine glycan. N-linked (GlcNAc...) asparagine glycosylation is found at N735, N745, N771, N780, and N822. LRR repeat units follow at residues 736 to 757 (ISIL…FCSL) and 758 to 781 (SNIQ…LSNT). LRR repeat units lie at residues 846–870 (LKLL…LGGL), 871–893 (VELE…SFSG), 895–918 (KNVE…LTDM), and 920–943 (SLAV…QFNT). N877 and N882 each carry an N-linked (GlcNAc...) asparagine glycan. N925 and N930 each carry an N-linked (GlcNAc...) asparagine glycan. A helical transmembrane segment spans residues 987–1007 (SFYWSFVAAYVTILLGILASL). The Cytoplasmic segment spans residues 1008-1068 (SFDSPWSRAW…PPALFHKTRT (61 aa)).

This sequence belongs to the RLP family.

Its subcellular location is the cell membrane. This is Receptor-like protein 13 from Arabidopsis thaliana (Mouse-ear cress).